The chain runs to 79 residues: ATP synthase subunit c (79 aa).

2 consecutive transmembrane segments (helical) span residues Met-11 to Leu-31 and Phe-53 to Tyr-73.

Belongs to the ATPase C chain family. In terms of assembly, F-type ATPases have 2 components, F(1) - the catalytic core - and F(0) - the membrane proton channel. F(1) has five subunits: alpha(3), beta(3), gamma(1), delta(1), epsilon(1). F(0) has three main subunits: a(1), b(2) and c(10-14). The alpha and beta chains form an alternating ring which encloses part of the gamma chain. F(1) is attached to F(0) by a central stalk formed by the gamma and epsilon chains, while a peripheral stalk is formed by the delta and b chains.

The protein localises to the cell inner membrane. Its function is as follows. F(1)F(0) ATP synthase produces ATP from ADP in the presence of a proton or sodium gradient. F-type ATPases consist of two structural domains, F(1) containing the extramembraneous catalytic core and F(0) containing the membrane proton channel, linked together by a central stalk and a peripheral stalk. During catalysis, ATP synthesis in the catalytic domain of F(1) is coupled via a rotary mechanism of the central stalk subunits to proton translocation. Functionally, key component of the F(0) channel; it plays a direct role in translocation across the membrane. A homomeric c-ring of between 10-14 subunits forms the central stalk rotor element with the F(1) delta and epsilon subunits. The protein is ATP synthase subunit c of Yersinia enterocolitica serotype O:8 / biotype 1B (strain NCTC 13174 / 8081).